The primary structure comprises 334 residues: Beta-hexosaminidase (334 aa).

Residues Asp60, Arg68, Arg133, and 163–164 each bind substrate; that span reads KH. His176 functions as the Proton donor/acceptor in the catalytic mechanism. Asp247 serves as the catalytic Nucleophile.

This sequence belongs to the glycosyl hydrolase 3 family. NagZ subfamily.

The protein resides in the cytoplasm. The enzyme catalyses Hydrolysis of terminal non-reducing N-acetyl-D-hexosamine residues in N-acetyl-beta-D-hexosaminides.. It participates in cell wall biogenesis; peptidoglycan recycling. Plays a role in peptidoglycan recycling by cleaving the terminal beta-1,4-linked N-acetylglucosamine (GlcNAc) from peptide-linked peptidoglycan fragments, giving rise to free GlcNAc, anhydro-N-acetylmuramic acid and anhydro-N-acetylmuramic acid-linked peptides. This chain is Beta-hexosaminidase, found in Xanthomonas euvesicatoria pv. vesicatoria (strain 85-10) (Xanthomonas campestris pv. vesicatoria).